A 345-amino-acid polypeptide reads, in one-letter code: Anthranilate phosphoribosyltransferase (345 aa).

5-phospho-alpha-D-ribose 1-diphosphate contacts are provided by residues Gly-80, 83 to 84, Thr-88, 90 to 93, 108 to 116, and Ser-120; these read GD, NIST, and KHGNRSVSS. Gly-80 is a binding site for anthranilate. Ser-92 lines the Mg(2+) pocket. Asn-111 serves as a coordination point for anthranilate. An anthranilate-binding site is contributed by Arg-166. Residues Asp-225 and Glu-226 each contribute to the Mg(2+) site.

It belongs to the anthranilate phosphoribosyltransferase family. In terms of assembly, homodimer. Requires Mg(2+) as cofactor.

The enzyme catalyses N-(5-phospho-beta-D-ribosyl)anthranilate + diphosphate = 5-phospho-alpha-D-ribose 1-diphosphate + anthranilate. It participates in amino-acid biosynthesis; L-tryptophan biosynthesis; L-tryptophan from chorismate: step 2/5. Functionally, catalyzes the transfer of the phosphoribosyl group of 5-phosphorylribose-1-pyrophosphate (PRPP) to anthranilate to yield N-(5'-phosphoribosyl)-anthranilate (PRA). The chain is Anthranilate phosphoribosyltransferase from Acetivibrio thermocellus (strain ATCC 27405 / DSM 1237 / JCM 9322 / NBRC 103400 / NCIMB 10682 / NRRL B-4536 / VPI 7372) (Clostridium thermocellum).